The following is a 162-amino-acid chain: Ribonuclease (162 aa).

The N-terminal stretch at 1–29 (MKKISSVFTMFALIAAILFSGFIPQQAYA) is a signal peptide. Positions 30–53 (ETPLTQTATNETATIQLTSDVHTL) are excised as a propeptide. The active-site Proton acceptor is Glu125. Residue His154 is the Proton donor of the active site.

It belongs to the ribonuclease N1/T1 family.

Its subcellular location is the secreted. Its function is as follows. This is a purine-specific ribonuclease. The protein is Ribonuclease of Bacillus intermedius.